A 614-amino-acid chain; its full sequence is Putative ABC transporter ATP-binding protein MA_1747 (614 aa).

ABC transporter domains lie at 11–251 (VRLE…KLGI) and 319–552 (VLIE…AGLL). Residues 45–52 (GPSGCGKS) and 352–359 (GHNGAGKT) each bind ATP.

This sequence belongs to the ABC transporter superfamily.

It localises to the cell membrane. Functionally, probably part of an ABC transporter complex. Responsible for energy coupling to the transport system. The sequence is that of Putative ABC transporter ATP-binding protein MA_1747 from Methanosarcina acetivorans (strain ATCC 35395 / DSM 2834 / JCM 12185 / C2A).